The following is a 74-amino-acid chain: UPF0346 protein SE_1114 (74 aa).

It belongs to the UPF0346 family.

The polypeptide is UPF0346 protein SE_1114 (Staphylococcus epidermidis (strain ATCC 12228 / FDA PCI 1200)).